The following is a 406-amino-acid chain: RILP-like protein 1 (406 aa).

Phosphoserine is present on serine 7. The RH1 domain maps to alanine 10–lysine 97. Position 47 is an S-nitrosocysteine (cysteine 47). Positions glutamate 76–histidine 258 form a coiled coil. Disordered stretches follow at residues glutamine 255–serine 280 and glutamate 330–serine 354. Serine 259 carries the phosphoserine modification. Positions glycine 262–serine 280 are enriched in acidic residues. The 66-residue stretch at arginine 294–leucine 359 folds into the RH2 domain.

The protein belongs to the RILPL family. In terms of assembly, interacts (when S-nitrosylated) with GAPDH. Interacts with RAB8A; interaction is dependent on the phosphorylation of 'Thr-72' of RAB8A. Interacts with RAB10 and RAB12; the interaction is dependent on the phosphorylation of 'Thr-73' of RAB10, and 'Ser-105' of RAB12. In terms of processing, S-nitrosylation is required for the interaction with GAPDH. Highly expressed in heart, skeletal muscle, brain and lung (at protein level).

It is found in the cytoplasm. Its subcellular location is the cytosol. It localises to the cytoskeleton. The protein resides in the microtubule organizing center. The protein localises to the centrosome. It is found in the centriole. Its subcellular location is the cilium basal body. In terms of biological role, plays a role in the regulation of cell shape and polarity. Plays a role in cellular protein transport, including protein transport away from primary cilia. Neuroprotective protein, which acts by sequestring GAPDH in the cytosol and prevent the apoptotic function of GAPDH in the nucleus. Competes with SIAH1 for binding GAPDH. Does not regulate lysosomal morphology and distribution. Binds to RAB10 following LRRK2-mediated RAB10 phosphorylation which leads to inhibition of ciliogenesis. The polypeptide is RILP-like protein 1 (Rilpl1) (Rattus norvegicus (Rat)).